The sequence spans 114 residues: Gas vesicle protein J1 (114 aa).

The interval 13-22 is alpha helix 1; it reads LAEMLEMLLD. Beta-strand regions lie at residues 25–35 and 40–50; these read VVVNADIAVSV and LLGIELRAAIA. The Conserved in GvpM1/2 but not GvpA motif lies at 46 to 50; the sequence is RAAIA. 3 alpha helix regions span residues 52-72, 78-87, and 95-105; these read FETAAEYGLEFPTGTDMERVE, SPDQSDPASE, and TNPLSDDSTPT. The tract at residues 63–114 is disordered; the sequence is PTGTDMERVESAANISPDQSDPASETQSETESTNPLSDDSTPTASTSAEETK. A compositionally biased stretch (polar residues) spans 75-98; that stretch reads ANISPDQSDPASETQSETESTNPL. Residues 99 to 114 show a composition bias toward low complexity; it reads SDDSTPTASTSAEETK.

Belongs to the gas vesicle GvpA family. As to quaternary structure, gvpF to GvpM interact with each other in vitro, and may form multi-subunit complex(es). Interacts with GvpA1.

Its subcellular location is the gas vesicle. Proteins GvpF to GvpM might be involved in nucleating gas vesicle formation. Mutagenesis of residues 13-61 shows that almost none of them can be substituted and still make gas vesicles. A minor component of the gas vesicle. Gas vesicles are hollow, gas filled proteinaceous nanostructures found in several microbial planktonic microorganisms. They allow positioning of halobacteria at the optimal depth for growth in the poorly aerated, shallow brine pools of their habitat. Functionally, expression of a 9.5 kb p-vac DNA fragment containing 2 divergently transcribed regions (gvpD-gvpE-gvpF-gvpG-gvpH-gvpI-gvpJ-gvpK-gvpL-gvpM and gvpA-gvpC-gvpN-gvpO) allows H.volcanii to produce gas vesicles. All site-directed mutagenesis is tested in H.volcanii. A minimal gas vesicle can be made in H.volcanii by gvpA1-gvpO1 plus gvpF1-gvpG1-gvpJ1-gvpK1-gvpL1-gvpM1; lack of enough GvpJ1 prevents formation. A similar region restores gas vesicle production in H.halobium without the p-vac locus, but it still has the c-vac locus. The chain is Gas vesicle protein J1 (gvpJ11) from Halobacterium salinarum (strain ATCC 700922 / JCM 11081 / NRC-1) (Halobacterium halobium).